The chain runs to 357 residues: DNA replication and repair protein RecF (357 aa).

An ATP-binding site is contributed by 30–37 (GANGSGKT).

It belongs to the RecF family.

The protein resides in the cytoplasm. Functionally, the RecF protein is involved in DNA metabolism; it is required for DNA replication and normal SOS inducibility. RecF binds preferentially to single-stranded, linear DNA. It also seems to bind ATP. This Salmonella arizonae (strain ATCC BAA-731 / CDC346-86 / RSK2980) protein is DNA replication and repair protein RecF.